Reading from the N-terminus, the 55-residue chain is Probable Rubredoxin-2 (55 aa).

Positions 4–54 (MARYQCMCGWVYDEDKGEPSQNIPPGTKFEDLPDTFRCPQCGLGKNAFRKI) constitute a Rubredoxin-like domain. Positions 9, 11, 41, and 44 each coordinate Fe cation.

It belongs to the rubredoxin family. Fe(3+) is required as a cofactor.

In terms of biological role, rubredoxin is a small nonheme, iron protein lacking acid-labile sulfide. Its single Fe, chelated to 4 Cys, functions as an electron acceptor and may also stabilize the conformation of the molecule. The sequence is that of Probable Rubredoxin-2 from Methanocaldococcus jannaschii (strain ATCC 43067 / DSM 2661 / JAL-1 / JCM 10045 / NBRC 100440) (Methanococcus jannaschii).